The chain runs to 755 residues: Exocyst complex component 3 (755 aa).

Lys38 is subject to N6-acetyllysine.

Belongs to the SEC6 family. As to quaternary structure, the exocyst complex is composed of EXOC1, EXOC2, EXOC3, EXOC4, EXOC5, EXOC6, EXOC7 and EXOC8. Interacts with EXOC3L1. Interacts with BIRC6/bruce. Interacts with MYRIP. Interacts with SLC6A9.

The protein localises to the cytoplasm. Its subcellular location is the perinuclear region. It localises to the cell projection. The protein resides in the growth cone. It is found in the midbody. The protein localises to the golgi apparatus. Its subcellular location is the neuron projection. In terms of biological role, component of the exocyst complex involved in the docking of exocytic vesicles with fusion sites on the plasma membrane. The polypeptide is Exocyst complex component 3 (Exoc3) (Mus musculus (Mouse)).